The primary structure comprises 532 residues: Spore germination protein 270-11 (532 aa).

Disordered stretches follow at residues 113-225 and 328-436; these read TTTS…GYGS and LSPT…TTGT. Residues 329–426 show a composition bias toward low complexity; that stretch reads SPTCSDSSSP…GSGSSSETQP (98 aa). Repeat copies occupy residues 339–342, 343–346, 347–350, 351–354, 355–358, 359–362, 363–366, 367–370, 371–374, 375–378, 397–400, 401–404, and 405–408. The 10 X 4 AA tandem repeats of T-[EP]-T-[EP] stretch occupies residues 339–378; it reads TPTPTETPTETPTETPTETPTETPTETPTETPTETETPTP. The 3 X 4 AA tandem repeats of T-[EP]-T-[PD] stretch occupies residues 397–408; it reads TPTPTETDTPTP.

This chain is Spore germination protein 270-11 (celB), found in Dictyostelium discoideum (Social amoeba).